The primary structure comprises 298 residues: DNA repair protein RecO (298 aa).

The protein belongs to the RecO family.

Functionally, involved in DNA repair and RecF pathway recombination. This chain is DNA repair protein RecO, found in Cupriavidus metallidurans (strain ATCC 43123 / DSM 2839 / NBRC 102507 / CH34) (Ralstonia metallidurans).